The primary structure comprises 1343 residues: DNA-directed RNA polymerase subunit beta (1343 aa).

This sequence belongs to the RNA polymerase beta chain family. The RNAP catalytic core consists of 2 alpha, 1 beta, 1 beta' and 1 omega subunit. When a sigma factor is associated with the core the holoenzyme is formed, which can initiate transcription.

The enzyme catalyses RNA(n) + a ribonucleoside 5'-triphosphate = RNA(n+1) + diphosphate. In terms of biological role, DNA-dependent RNA polymerase catalyzes the transcription of DNA into RNA using the four ribonucleoside triphosphates as substrates. This Shewanella sp. (strain W3-18-1) protein is DNA-directed RNA polymerase subunit beta.